A 588-amino-acid chain; its full sequence is Protein POF1B (588 aa).

Coiled-coil stretches lie at residues Ser332 to Thr442 and Leu502 to Ile530.

In terms of assembly, interacts with nonmuscle actin.

The protein localises to the cell junction. It localises to the tight junction. Functionally, plays a key role in the organization of epithelial monolayers by regulating the actin cytoskeleton. May be involved in ovary development. The protein is Protein POF1B (POF1B) of Pongo abelii (Sumatran orangutan).